Here is a 1368-residue protein sequence, read N- to C-terminus: MAP3K epsilon protein kinase 1 (1368 aa).

Residues 20–274 (YMLGDEIGKG…AKTLLSHPWI (255 aa)) enclose the Protein kinase domain. 2 HEAT repeats span residues 25-62 (EIGK…EDLN) and 86-125 (SKTK…AVYI). ATP is bound by residues 26 to 34 (IGKGAYGRV) and lysine 49. The active-site Proton acceptor is the aspartate 144. Residues 218 to 256 (PYYDLQPMPALFRIVQDDNPPIPDSLSPDITDFLRQCFK) form an HEAT 3 repeat. Disordered stretches follow at residues 296–415 (EATA…KNTS) and 430–507 (QTSH…PVAD). Acidic residues predominate over residues 351-364 (LGEEGTDNSEDDIM). Composition is skewed to basic and acidic residues over residues 388 to 399 (SDFHGKSERGET) and 470 to 486 (SLHD…EGKP). Residues 488 to 502 (EASTSMPTSNVNQGD) show a composition bias toward polar residues. 5 HEAT repeats span residues 533 to 571 (SNDG…LFPL), 628 to 653 (IPKS…DFQE), 654 to 695 (NACL…SSPL), 699 to 737 (MFIA…VFKL), and 750 to 788 (AAKN…RVRS). Positions 777-883 (GGLDGQAPRV…ISLSANRTST (107 aa)) are disordered. Residues 791-808 (LDPNNPIFGQNETSSLSM) show a composition bias toward polar residues. Basic and acidic residues-rich tracts occupy residues 813 to 826 (DVLK…EEPS) and 836 to 852 (SDVH…DKPR). HEAT repeat units follow at residues 903–940 (EQVR…HESR), 1025–1063 (ATSS…ADTT), 1067–1105 (YMCS…DPNC), 1112–1150 (ADAI…INKR), 1154–1191 (QAAE…ASRN), 1196–1234 (LRAH…DNRK), 1258–1281 (RHFV…NKTL), 1282–1318 (AVNG…HHPR), and 1348–1368 (QVLV…NTIL).

The protein belongs to the protein kinase superfamily. Ser/Thr protein kinase family. As to quaternary structure, interacts with SGP1. In terms of processing, autophosphorylated. In terms of tissue distribution, expressed in both the sporophytic and the gametophytic tissues, especially in dividing cells. Mostly present in flower buds and mature flowers. Also accumulates in embryos, in roots apices, trichomes and ovule integuments.

The protein localises to the cytoplasm. It localises to the cytoskeleton. Its subcellular location is the microtubule organizing center. It is found in the nucleus. The protein resides in the nucleolus. The protein localises to the cell membrane. It catalyses the reaction L-seryl-[protein] + ATP = O-phospho-L-seryl-[protein] + ADP + H(+). The enzyme catalyses L-threonyl-[protein] + ATP = O-phospho-L-threonyl-[protein] + ADP + H(+). Its function is as follows. Serine/threonine-protein kinase involved in the spatial and temporal control system organizing cortical activities in mitotic and postmitotic cells. Required for the normal functioning of the plasma membrane in developing pollen. Involved in the regulation of cell expansion, cell elongation, and embryo development. This Arabidopsis thaliana (Mouse-ear cress) protein is MAP3K epsilon protein kinase 1.